Reading from the N-terminus, the 258-residue chain is Global transcriptional regulator CodY (258 aa).

The interval 1 to 156 is GAF domain; the sequence is MSSLLSKTRR…SATIVGMEML (156 aa). A DNA-binding region (H-T-H motif) is located at residues 204-223; the sequence is ASKIADKVGITRSVIVNALR.

Belongs to the CodY family.

The protein resides in the cytoplasm. DNA-binding global transcriptional regulator which is involved in the adaptive response to starvation and acts by directly or indirectly controlling the expression of numerous genes in response to nutrient availability. During rapid exponential growth, CodY is highly active and represses genes whose products allow adaptation to nutrient depletion. The sequence is that of Global transcriptional regulator CodY from Clostridium botulinum (strain Alaska E43 / Type E3).